A 639-amino-acid chain; its full sequence is Alpha-dioxygenase 1 (639 aa).

His163 (proton acceptor) is an active-site residue. Asp164 is a binding site for Ca(2+). His168 contributes to the heme b binding site. Ca(2+) contacts are provided by Thr216, Trp218, Asp220, and Ser222. Residues His389, Arg486, and Arg490 each coordinate heme b.

This sequence belongs to the peroxidase family. In terms of assembly, forms monomers in solution. Heme b is required as a cofactor. Ca(2+) serves as cofactor. As to expression, expressed in roots (epiderm), mature flowers (e.g. anthers) and senescing leaves.

The protein localises to the lipid droplet. The enzyme catalyses a 1,2-saturated fatty acid + O2 = a (2R)-2-hydroperoxy fatty acid. It catalyses the reaction (9Z,12Z,15Z)-octadecatrienoate + O2 = (R)-2-hydroperoxy-(9Z,12Z,15Z)-octadecatrienoate. The catalysed reaction is hexadecanoate + O2 = (2R)-2-hydroperoxyhexadecanoate. It carries out the reaction (9Z,12Z)-octadecadienoate + O2 = (2R,9Z,12Z)-2-hydroperoxyoctadecadienoate. The enzyme catalyses (9Z)-octadecenoate + O2 = (2R,9Z)-2-hydroperoxyoctadecenoate. Its function is as follows. Alpha-dioxygenase that catalyzes the primary oxygenation step of a variety of 14-20 carbon fatty acids, containing up to three unsaturated bonds, into their corresponding 2R-hydroperoxides. Involved in the production of oxylipins that function in cell signaling, wound healing, and protection from infection. Mediates protection against oxidative stress and cell death, probably by generating some lipid-derived molecules. Promotes local and systemic plant defense in a salicylic acid (SA)-dependent manner, including the establishment of systemic acquired resistance (SAR) in response to incompatible interaction. Involved in a negative regulation of abscisic acid (ABA)-mediated signaling pathway. This Arabidopsis thaliana (Mouse-ear cress) protein is Alpha-dioxygenase 1.